The sequence spans 259 residues: Ribonuclease HII (259 aa).

The region spanning 70-258 is the RNase H type-2 domain; it reads TLIAGIDEVG…VKSLVLGKKE (189 aa). A divalent metal cation contacts are provided by Asp-76, Glu-77, and Asp-168.

It belongs to the RNase HII family. It depends on Mn(2+) as a cofactor. Mg(2+) serves as cofactor.

The protein resides in the cytoplasm. It catalyses the reaction Endonucleolytic cleavage to 5'-phosphomonoester.. Functionally, endonuclease that specifically degrades the RNA of RNA-DNA hybrids. The chain is Ribonuclease HII from Streptococcus pneumoniae serotype 4 (strain ATCC BAA-334 / TIGR4).